We begin with the raw amino-acid sequence, 226 residues long: 7-cyano-7-deazaguanine synthase (226 aa).

Residue 10–20 (LSGGLDSATAA) participates in ATP binding. The Zn(2+) site is built by cysteine 191, cysteine 199, cysteine 202, and cysteine 205.

The protein belongs to the QueC family. Zn(2+) is required as a cofactor.

It catalyses the reaction 7-carboxy-7-deazaguanine + NH4(+) + ATP = 7-cyano-7-deazaguanine + ADP + phosphate + H2O + H(+). It participates in purine metabolism; 7-cyano-7-deazaguanine biosynthesis. Its function is as follows. Catalyzes the ATP-dependent conversion of 7-carboxy-7-deazaguanine (CDG) to 7-cyano-7-deazaguanine (preQ(0)). This is 7-cyano-7-deazaguanine synthase from Parasynechococcus marenigrum (strain WH8102).